An 829-amino-acid polypeptide reads, in one-letter code: ATP-dependent RNA helicase drs1 (829 aa).

2 disordered regions span residues methionine 1–glutamate 96 and arginine 145–phenylalanine 295. Positions aspartate 20–glutamate 32 are enriched in acidic residues. The span at lysine 48–lysine 59 shows a compositional bias: basic residues. The segment covering threonine 63–alanine 78 has biased composition (acidic residues). A compositionally biased stretch (basic and acidic residues) spans alanine 150–glutamate 163. Composition is skewed to acidic residues over residues aspartate 164 to leucine 190, aspartate 218 to aspartate 228, aspartate 235 to serine 246, and glutamine 258 to glutamate 271. Residues alanine 272–glutamate 291 are compositionally biased toward basic and acidic residues. The Q motif motif lies at serine 293 to alanine 321. Positions isoleucine 324–isoleucine 498 constitute a Helicase ATP-binding domain. Alanine 337–threonine 344 contributes to the ATP binding site. A DEAD box motif is present at residues aspartate 446 to aspartate 449. One can recognise a Helicase C-terminal domain in the interval tyrosine 528–glutamine 707. A disordered region spans residues threonine 728–lysine 829. Over residues glycine 749 to glycine 791 the composition is skewed to basic and acidic residues. A compositionally biased stretch (basic residues) spans lysine 800–glycine 815.

The protein belongs to the DEAD box helicase family. DDX27/DRS1 subfamily. In terms of assembly, associates with pre-ribosomal particles.

The protein resides in the nucleus. Its subcellular location is the nucleolus. It catalyses the reaction ATP + H2O = ADP + phosphate + H(+). ATP-binding RNA helicase involved in ribosome assembly. This chain is ATP-dependent RNA helicase drs1 (drh-11), found in Neurospora crassa (strain ATCC 24698 / 74-OR23-1A / CBS 708.71 / DSM 1257 / FGSC 987).